A 105-amino-acid chain; its full sequence is Malonate decarboxylase acyl carrier protein (105 aa).

Residue Ser28 is modified to O-(phosphoribosyl dephospho-coenzyme A)serine.

Belongs to the MdcC family. Covalently binds the prosthetic group of malonate decarboxylase.

Its subcellular location is the cytoplasm. Functionally, subunit of malonate decarboxylase, it is an acyl carrier protein to which acetyl and malonyl thioester residues are bound via a 2'-(5''-phosphoribosyl)-3'-dephospho-CoA prosthetic group and turn over during the catalytic mechanism. This chain is Malonate decarboxylase acyl carrier protein, found in Xanthomonas campestris pv. campestris (strain 8004).